An 822-amino-acid chain; its full sequence is Collagen alpha chain CG42342 (822 aa).

Disordered stretches follow at residues 1 to 45 and 66 to 99; these read MRKH…VEAP and RLAPPPCQHPINNSNNNSNISNNSSNSSSSKERP. Residues 1–104 lie on the Cytoplasmic side of the membrane; the sequence is MRKHKAPPSG…SKERPRPTVR (104 aa). A compositionally biased stretch (polar residues) spans 11 to 25; the sequence is SPRTMAQDNSQSEPS. The span at 76 to 94 shows a compositional bias: low complexity; sequence INNSNNNSNISNNSSNSSS. Residues 105–125 traverse the membrane as a helical; Signal-anchor for type II membrane protein segment; it reads FISLLHVASYVLCLCAFSFAL. Topologically, residues 126 to 822 are extracellular; that stretch reads YGNVRQTRLE…EYQDNLHNNE (697 aa). Residues 131–162 adopt a coiled-coil conformation; that stretch reads QTRLEQRMQRLQQLDARIVELELRLEQQQLLH. Disordered stretches follow at residues 169–188, 205–297, and 345–822; these read QVLASHPSDRDSSNSNNGSQ, VSHL…GHPG, and LKGE…HNNE. The stretch at 194–222 forms a coiled coil; sequence VRRELHRLRRDVSHLQLTRRQQRRQAAEA. Collagen-like domains lie at 241-299, 350-409, 430-469, 493-526, 527-586, 621-680, and 681-740; these read QPGP…PGMD, GEPG…KGDR, GPPGPAGPPGPPGEPGARGEPGPIGPAGPPGEKGPRGKRG, RGPPGPPGIAGKDGRDGRDGSKGEPGEPGEPGSL, GPRG…KGDK, GPPG…SGKA, and GIPG…KGEQ. The span at 242–251 shows a compositional bias: pro residues; sequence PGPPGPPGPP. Residues 284–293 are compositionally biased toward basic and acidic residues; sequence PGDKGQKGDV. Positions 360 to 402 are enriched in low complexity; that stretch reads EAGQPGAPGERGPPGEIGAQGPQGEAGQPGVAGPPGVAGAPGT. The segment covering 403 to 412 has biased composition (basic and acidic residues); that stretch reads KGDKGDRGDR. Pro residues predominate over residues 431–443; sequence PPGPAGPPGPPGE. Residues 504-517 are compositionally biased toward basic and acidic residues; it reads KDGRDGRDGSKGEP. Residues 522-540 show a composition bias toward low complexity; sequence EPGSLGPRGLDGLPGEPGI. Pro residues predominate over residues 567-579; it reads LMGPPGLPGPPGY. Basic and acidic residues predominate over residues 583 to 602; sequence KGDKGDRGDSYRKMRRRQDD. Over residues 619 to 628 the composition is skewed to pro residues; it reads PPGPPGPMGP. Basic and acidic residues predominate over residues 638-655; that stretch reads RGLDGRKGDPGEKGHKGD. Over residues 658–668 the composition is skewed to low complexity; that stretch reads PMGLPGPMGMR. A coiled-coil region spans residues 790-822; it reads TSDYEQEEEEDDEQAEDNENEYDEYQDNLHNNE. Acidic residues predominate over residues 793 to 815; sequence YEQEEEEDDEQAEDNENEYDEYQ.

Its subcellular location is the cell membrane. The chain is Collagen alpha chain CG42342 from Drosophila melanogaster (Fruit fly).